The following is a 322-amino-acid chain: DNA repair and recombination protein RadA (322 aa).

105–112 (GMYGSGKT) lines the ATP pocket.

This sequence belongs to the eukaryotic RecA-like protein family.

Its function is as follows. Involved in DNA repair and in homologous recombination. Binds and assemble on single-stranded DNA to form a nucleoprotein filament. Hydrolyzes ATP in a ssDNA-dependent manner and promotes DNA strand exchange between homologous DNA molecules. This Methanococcus maripaludis (strain C6 / ATCC BAA-1332) protein is DNA repair and recombination protein RadA.